A 182-amino-acid chain; its full sequence is UPF0397 protein SPT_0523 (182 aa).

5 helical membrane-spanning segments follow: residues 10 to 30, 46 to 66, 73 to 93, 109 to 129, and 148 to 168; these read VVAV…NIPT, LLSI…GHAI, YGLW…VGLF, ILIF…VLAP, and IVAG…LLLA.

This sequence belongs to the UPF0397 family.

The protein localises to the cell membrane. The sequence is that of UPF0397 protein SPT_0523 from Streptococcus pneumoniae (strain Taiwan19F-14).